A 251-amino-acid polypeptide reads, in one-letter code: NADPH-dependent oxidoreductase (251 aa).

It belongs to the flavin oxidoreductase frp family. It depends on FMN as a cofactor.

Functionally, reduces FMN, organic nitro compounds and disulfide DTNB. Involved in maintenance of the cellular redox state and the disulfide stress response. This chain is NADPH-dependent oxidoreductase (nfrA), found in Staphylococcus epidermidis (strain ATCC 12228 / FDA PCI 1200).